Here is a 133-residue protein sequence, read N- to C-terminus: p53 and DNA damage-regulated protein 1 (133 aa).

The protein belongs to the prefoldin subunit beta family. As to quaternary structure, component of the PAQosome complex which is responsible for the biogenesis of several protein complexes and which consists of R2TP complex members RUVBL1, RUVBL2, RPAP3 and PIH1D1, URI complex members PFDN2, PFDN6, PDRG1, UXT and URI1 as well as ASDURF, POLR2E and DNAAF10/WDR92.

Its subcellular location is the cytoplasm. In terms of biological role, may play a role in chaperone-mediated protein folding. This chain is p53 and DNA damage-regulated protein 1 (Pdrg1), found in Rattus norvegicus (Rat).